Here is a 318-residue protein sequence, read N- to C-terminus: Nucleotide-binding protein Jann_0539 (318 aa).

Position 17–24 (17–24 (GPSGAGRS)) interacts with ATP. 64 to 67 (DPRT) provides a ligand contact to GTP. The segment at 278–318 (GWQVSKRHRDVDKDASENSDRDRGASARTAASTDDGEAEQP) is disordered. Over residues 286-302 (RDVDKDASENSDRDRGA) the composition is skewed to basic and acidic residues.

This sequence belongs to the RapZ-like family.

Its function is as follows. Displays ATPase and GTPase activities. The sequence is that of Nucleotide-binding protein Jann_0539 from Jannaschia sp. (strain CCS1).